We begin with the raw amino-acid sequence, 212 residues long: Pyridoxine/pyridoxamine 5'-phosphate oxidase (212 aa).

Substrate-binding positions include 8–11 (RREY) and Lys66. Residues 61–66 (RIVLLK), 76–77 (FT), Arg82, Lys83, and Gln105 each bind FMN. Substrate is bound by residues Tyr123, Arg127, and Ser131. FMN-binding positions include 140-141 (QS) and Trp185. 191 to 193 (RLH) is a binding site for substrate. Arg195 serves as a coordination point for FMN.

The protein belongs to the pyridoxamine 5'-phosphate oxidase family. Homodimer. Requires FMN as cofactor.

The catalysed reaction is pyridoxamine 5'-phosphate + O2 + H2O = pyridoxal 5'-phosphate + H2O2 + NH4(+). It carries out the reaction pyridoxine 5'-phosphate + O2 = pyridoxal 5'-phosphate + H2O2. It participates in cofactor metabolism; pyridoxal 5'-phosphate salvage; pyridoxal 5'-phosphate from pyridoxamine 5'-phosphate: step 1/1. The protein operates within cofactor metabolism; pyridoxal 5'-phosphate salvage; pyridoxal 5'-phosphate from pyridoxine 5'-phosphate: step 1/1. In terms of biological role, catalyzes the oxidation of either pyridoxine 5'-phosphate (PNP) or pyridoxamine 5'-phosphate (PMP) into pyridoxal 5'-phosphate (PLP). This Shewanella oneidensis (strain ATCC 700550 / JCM 31522 / CIP 106686 / LMG 19005 / NCIMB 14063 / MR-1) protein is Pyridoxine/pyridoxamine 5'-phosphate oxidase.